We begin with the raw amino-acid sequence, 199 residues long: Transgelin-2 (199 aa).

The residue at position 2 (Ala2) is an N-acetylalanine. Phosphoserine is present on Ser11. 2 positions are modified to N6-acetyllysine: Lys17 and Lys20. Residues 24 to 136 (ADLEQILIQW…RTLMNLGGLA (113 aa)) enclose the Calponin-homology (CH) domain. At Ser163 the chain carries Phosphoserine. A Glycyl lysine isopeptide (Lys-Gly) (interchain with G-Cter in SUMO2) cross-link involves residue Lys171. One copy of the Calponin-like repeat lies at 174 to 199 (IGLQMGTNRGASQAGMTGYGMPRQIL). Thr180 is modified (phosphothreonine). 2 positions are modified to omega-N-methylarginine: Arg182 and Arg196.

This sequence belongs to the calponin family.

This chain is Transgelin-2 (TAGLN2), found in Bos taurus (Bovine).